Reading from the N-terminus, the 40-residue chain is Potassium channel toxin alpha-KTx 12.3 (40 aa).

Cystine bridges form between C2-C5, C10-C31, C16-C36, and C20-C38.

In terms of tissue distribution, expressed by the venom gland.

The protein resides in the secreted. Inhibits high conductance calcium-activated potassium channels (KCNMA). Inhibits Shaker B potassium channels. In Tityus costatus (Brazilian scorpion), this protein is Potassium channel toxin alpha-KTx 12.3.